The following is a 544-amino-acid chain: Chaperonin GroEL (544 aa).

ATP-binding positions include threonine 30–proline 33, lysine 51, aspartate 87–threonine 91, glycine 415, and aspartate 495.

This sequence belongs to the chaperonin (HSP60) family. Forms a cylinder of 14 subunits composed of two heptameric rings stacked back-to-back. Interacts with the co-chaperonin GroES.

The protein localises to the cytoplasm. It catalyses the reaction ATP + H2O + a folded polypeptide = ADP + phosphate + an unfolded polypeptide.. Its function is as follows. Together with its co-chaperonin GroES, plays an essential role in assisting protein folding. The GroEL-GroES system forms a nano-cage that allows encapsulation of the non-native substrate proteins and provides a physical environment optimized to promote and accelerate protein folding. In Bartonella bacilliformis (strain ATCC 35685 / KC583 / Herrer 020/F12,63), this protein is Chaperonin GroEL.